The sequence spans 258 residues: UPF0328 protein ECU07_0060 (258 aa).

It belongs to the UPF0328 family.

The polypeptide is UPF0328 protein ECU07_0060 (Encephalitozoon cuniculi (strain GB-M1) (Microsporidian parasite)).